A 367-amino-acid chain; its full sequence is Cyclin-D5-1 (367 aa).

The disordered stretch occupies residues 307 to 333 (QPTSPASKSTTTTTGKRSSSSSCSEST).

It belongs to the cyclin family. Cyclin D subfamily.

This chain is Cyclin-D5-1 (CYCD5-1), found in Oryza sativa subsp. japonica (Rice).